The primary structure comprises 701 residues: Arachidonate 12-lipoxygenase, 12R-type (701 aa).

Residues 2–119 (ATYKVKVATG…TLSLREATGK (118 aa)) enclose the PLAT domain. Positions 120 to 701 (TTADDTLPIL…PVLIENSISI (582 aa)) constitute a Lipoxygenase domain. His398, His403, His578, Asn582, and Ile701 together coordinate Fe cation.

It belongs to the lipoxygenase family. The cofactor is Fe cation.

The protein resides in the cytoplasm. Its subcellular location is the perinuclear region. The catalysed reaction is (5Z,8Z,11Z,14Z)-eicosatetraenoate + O2 = (12R)-hydroperoxy-(5Z,8Z,10E,14Z)-eicosatetraenoate. The enzyme catalyses N-[omega-(9Z,12Z)-octadecadienoyloxy]acyl-beta-D-glucosyl-(1&lt;-&gt;1)-octadecasphing-4E-enine + O2 = N-[omega-(9R)-hydroperoxy-(10E,12Z)-octadecadienoyloxy]acyl-beta-D-glucosyl-(1&lt;-&gt;1)-octadecasphing-4E-enine. It catalyses the reaction a N-[omega-(9Z,12Z)-octadecadienoyloxy]-acylsphin-4E-enine + O2 = a N-[omega-(9R)-hydroperoxy-(10E,12Z)-octadecadienoyloxy]-acylsphin-4E-enine. It carries out the reaction (6Z,9Z,12Z)-octadecatrienoate + O2 = 10-hydroperoxy-(6Z,8E,12Z)-octadecatrienoate. The catalysed reaction is (4Z,7Z,10Z,13Z,16Z,19Z)-docosahexaenoate + O2 = 14-hydroperoxy-(4Z,7Z,10Z,12E,16Z,19Z)-docosahexaenoate. The enzyme catalyses (8Z,11Z,14Z)-eicosatrienoate + O2 = (8Z,10E,14Z)-12-hydroperoxyeicosatrienoate. It catalyses the reaction (5Z,8Z,11Z,14Z,17Z)-eicosapentaenoate + O2 = (5Z,7Z,8Z,10E,14Z,17Z)-12-hydroperoxyeicosapentaenoate. It carries out the reaction (6Z,9Z,12Z)-octadecatrienoate + O2 = 10R-hydroperoxy-(6Z,8E,12Z)-octadecatrienoate. The catalysed reaction is 1-O-methyl-(5Z,8Z,11Z,14Z)-eicosatetraenoate + O2 = 1-O-methyl (5Z,8Z,10E,12R,14Z)-hydroperoxyiecosatetraenoate. The enzyme catalyses 1-O-methyl-(5Z,8Z,11Z,14Z)-eicosatetraenoate + O2 = 1-O-methyl-8-hydroperoxy-(5Z,9E,11Z,14Z)-eicosatetraenoate. It catalyses the reaction 1-O-methyl-(5Z,8Z,11Z,14Z)-eicosatetraenoate + O2 = 1-O-methyl-(8R)-hydroperoxy-(5Z,9E,11Z,14Z)-eicosatrienoate. It carries out the reaction 1-O-methyl-(9Z,12Z)-octadecadienoate + O2 = 1-O-methyl-(9R)-hydroperoxy-(10E,12Z)-octadecadienoate. The catalysed reaction is 1-O-methyl-20-hydroxy-(5Z,8Z,11Z,14Z)-eicosatetraenoate + O2 = 1-O-methyl-8-hydroperoxy-20-hydroxy-(5Z,9E,11Z,14Z)-eicosatetraenoate. The enzyme catalyses 1-O-methyl-20-hydroxy-(5Z,8Z,11Z,14Z)-eicosatetraenoate + O2 = 1-O-methyl-12-hydroperoxy-20-hydroxy-(5Z,8Z,10E,14Z)-eicosatetraenoate. It catalyses the reaction 1-O-methyl-20-hydroxy-(5Z,8Z,11Z,14Z)-eicosatetraenoate + O2 = 1-O-methyl-9-hydroperoxy-20-hydroxy-(5Z,7E,11Z,14Z)-eicosatetraenoate. It carries out the reaction 1-O-methyl-(9Z,12Z)-octadecadienoate + O2 = 1-O-methyl-(13S)-hydroperoxy-(9Z,11E)-octadecadienoate. It functions in the pathway lipid metabolism; hydroperoxy eicosatetraenoic acid biosynthesis. It participates in lipid metabolism; sphingolipid metabolism. Its activity is regulated as follows. Increased by calcium. Functionally, catalyzes the regio and stereo-specific incorporation of a single molecule of dioxygen into free and esterified polyunsaturated fatty acids generating lipid hydroperoxides that can be further reduced to the corresponding hydroxy species. In the skin, acts upstream of ALOXE3 on the lineolate moiety of esterified omega-hydroxyacyl-sphingosine (EOS) ceramides to produce an epoxy-ketone derivative, a crucial step in the conjugation of omega-hydroxyceramide to membrane proteins. Therefore plays a crucial role in the synthesis of corneocytes lipid envelope and the establishment of the skin barrier to water loss. May also play a role in the regulation of the expression of airway mucins. The sequence is that of Arachidonate 12-lipoxygenase, 12R-type from Rattus norvegicus (Rat).